The following is a 791-amino-acid chain: MQAGPVQAVPPPPPVATESKQPIEEEASSKEDPTPSKPVVGIIYPPPEVRNIVDKTASFVARNGPEFEARIRQNEINNPKFNFLNPNDPYHAYYRHKVSEFKEGKAQEPSAAIPKVMQQQQQATQQQLPQKVQAQVIQETIVPKEPPPEFEFIADPPSISAFDLDVVKLTAQFVARNGRQFLTQLMQKEQRNYQFDFLRPQHSLFNYFTKLVEQYTKILIPPKGLFSKLKKEAENPREVLDQVCYRVEWAKFQERERKKEEEEKEKERVAYAQIDWHDFVVVETVDFQPNEQGNFPPPTTPEELGARILIQERYEKFGESEEVEMEVESDEEDQEKAEETPSQLDQDTQVQDMDEGSDDEEEGQKVPPPPETPMPPPLPPTPDQVIVRKDYDPKASKPLPPAPAPDEYLVSPITGEKIPASKMQEHMRIGLLDPRWLEQRDRSIREKQSDDEVYAPGLDIESSLKQLAERRTDIFGVEETAIGKKIGEEEIQKPEEKVTWDGHSGSMARTQQAAQANITLQEQIEAIHKAKGLVPEDDTKEKIGPSKPNEIPQQPPPPSSATNIPSSAPPITSVPRPPAMPPPVRTTVVSAVPVMPRPPMASVVRLPPGSVIAPMPPIIHAPRINVVPMPPAAPPIMAPRPPPMIVPTAFVPAPPVAPVPAPAPMPPVHPPPPMEDEPPSKKLKTEDSLMPEEEFLRRNKGPVSIKVQVPNMQDKTEWKLNGQGLVFTLPLTDQVSVIKVKIHEATGMPAGKQKLQYEGIFIKDSNSLAYYNMASGAVIHLALKERGGRKK.

The disordered stretch occupies residues 1–41; the sequence is MQAGPVQAVPPPPPVATESKQPIEEEASSKEDPTPSKPVVG. Lys20 is covalently cross-linked (Glycyl lysine isopeptide (Lys-Gly) (interchain with G-Cter in SUMO2)). Basic and acidic residues predominate over residues 21 to 34; the sequence is QPIEEEASSKEDPT. An SURP motif 1 repeat occupies 52–94; the sequence is IVDKTASFVARNGPEFEARIRQNEINNPKFNFLNPNDPYHAYY. Lys55 is subject to N6-acetyllysine. Residue Lys131 forms a Glycyl lysine isopeptide (Lys-Gly) (interchain with G-Cter in SUMO2) linkage. One copy of the SURP motif 2 repeat lies at 166–208; sequence VVKLTAQFVARNGRQFLTQLMQKEQRNYQFDFLRPQHSLFNYF. The segment at 318-411 is disordered; sequence GESEEVEMEV…APAPDEYLVS (94 aa). 2 positions are modified to phosphoserine: Ser320 and Ser329. The segment covering 320–336 has biased composition (acidic residues); the sequence is SEEVEMEVESDEEDQEK. Residues 340-351 show a composition bias toward polar residues; sequence TPSQLDQDTQVQ. Positions 352–362 are enriched in acidic residues; that stretch reads DMDEGSDDEEE. Phosphoserine is present on Ser357. A compositionally biased stretch (pro residues) spans 366–382; the sequence is VPPPPETPMPPPLPPTP. Residues 386 to 395 show a composition bias toward basic and acidic residues; that stretch reads IVRKDYDPKA. A Phosphoserine modification is found at Ser411. Residue Lys422 forms a Glycyl lysine isopeptide (Lys-Gly) (interchain with G-Cter in SUMO2) linkage. Ser449 carries the post-translational modification Phosphoserine. Tyr454 is subject to Phosphotyrosine. Over residues 486-500 the composition is skewed to basic and acidic residues; the sequence is IGEEEIQKPEEKVTW. Disordered stretches follow at residues 486-516, 528-582, and 664-684; these read IGEE…AAQA, HKAK…AMPP, and PMPP…KKLK. Lys497 participates in a covalent cross-link: Glycyl lysine isopeptide (Lys-Gly) (interchain with G-Cter in SUMO2). At Ser506 the chain carries Phosphoserine. Polar residues predominate over residues 507 to 516; sequence MARTQQAAQA. A Glycyl lysine isopeptide (Lys-Gly) (interchain with G-Cter in SUMO2) cross-link involves residue Lys540. Positions 561-570 are enriched in polar residues; sequence ATNIPSSAPP. The segment covering 664–673 has biased composition (pro residues); it reads PMPPVHPPPP. The interval 678-700 is required and sufficient for nuclear import; it reads PPSKKLKTEDSLMPEEEFLRRNK. Lys684 is covalently cross-linked (Glycyl lysine isopeptide (Lys-Gly) (interchain with G-Cter in SUMO2)). The Ubiquitin-like domain occupies 705 to 788; that stretch reads IKVQVPNMQD…IHLALKERGG (84 aa). At Tyr757 the chain carries Phosphotyrosine.

As to quaternary structure, component of the 17S U2 SnRNP complex, a ribonucleoprotein complex that contains small nuclear RNA (snRNA) U2 and a number of specific proteins. Part of the SF3A subcomplex of the 17S U2 SnRNP complex which is composed of three subunits; SF3A3/SAP61, SF3A2/SAP62 and SF3A1/SAP114. SF3A associates with the splicing factor SF3B and a 12S RNA unit to form the mature 17S U2 small nuclear ribonucleoprotein complex (17S U2 snRNP). SF3A1 functions as a scaffold that interacts directly with both SF3A2 and SF3A3. Identified in the spliceosome 'E' complex, a precursor of the spliceosome 'A' complex. Identified in the spliceosome 'A' and 'B' complexes. Identified in the spliceosome 'C' complex. Interacts with P2RX6; resulting in a reduction of the splicing activity.

The protein localises to the nucleus. It is found in the nucleus speckle. Functionally, component of the 17S U2 SnRNP complex of the spliceosome, a large ribonucleoprotein complex that removes introns from transcribed pre-mRNAs. The 17S U2 SnRNP complex (1) directly participates in early spliceosome assembly and (2) mediates recognition of the intron branch site during pre-mRNA splicing by promoting the selection of the pre-mRNA branch-site adenosine, the nucleophile for the first step of splicing. Within the 17S U2 SnRNP complex, SF3A1 is part of the SF3A subcomplex that contributes to the assembly of the 17S U2 snRNP, and the subsequent assembly of the pre-spliceosome 'E' complex and the pre-catalytic spliceosome 'A' complex. Involved in pre-mRNA splicing as a component of pre-catalytic spliceosome 'B' complexes. The sequence is that of Splicing factor 3A subunit 1 (Sf3a1) from Mus musculus (Mouse).